The sequence spans 307 residues: MNHATSELHDESAVTSIPETTRLQDLKALVKMGIVNSNTLTVFTGFWLALHFNGLSVMDNLDKLFFTIVGSGLVMAGVCCLNNYIDRDIDPLMERTKTRPTVTGKYKPGFALTFGLVILLLGFVFLLLTTPMAVLMGFIGAFTYVVLYSLWTKRKYTLNTVVGSISGAVPPLIGWAAIDPSLGHPIAWMLFLIMFIWQIPHFLALAMKRVDEYRNAGIPMLPVVHGFEITKRQIMIWTVCLLPLPFYMSGLGITFMVIATLLNIGWIVLGFYGFRKKDDIKWSVQMFVYSLNYLTILFVSMIVVTFF.

A run of 8 helical transmembrane segments spans residues 32–52 (MGIV…ALHF), 65–85 (FFTI…NNYI), 108–128 (PGFA…FLLL), 131–151 (PMAV…YSLW), 158–178 (LNTV…WAAI), 186–206 (IAWM…LALA), 251–271 (LGIT…VLGF), and 287–307 (FVYS…VTFF).

It belongs to the UbiA prenyltransferase family. Protoheme IX farnesyltransferase subfamily. In terms of assembly, interacts with CtaA.

The protein resides in the cell membrane. The catalysed reaction is heme b + (2E,6E)-farnesyl diphosphate + H2O = Fe(II)-heme o + diphosphate. It participates in porphyrin-containing compound metabolism; heme O biosynthesis; heme O from protoheme: step 1/1. Functionally, converts heme B (protoheme IX) to heme O by substitution of the vinyl group on carbon 2 of heme B porphyrin ring with a hydroxyethyl farnesyl side group. This is Protoheme IX farnesyltransferase from Bacillus anthracis (strain A0248).